Reading from the N-terminus, the 809-residue chain is AP-3 complex subunit beta (809 aa).

HEAT repeat units lie at residues 37 to 76 (YYSQ…DDDS), 112 to 151 (DPNL…SSLA), 153 to 186 (IILH…AGKN), 187 to 224 (DYHE…DHLE), and 524 to 561 (KICP…YDID). 4 positions are modified to phosphoserine: serine 693, serine 698, serine 724, and serine 726. Disordered regions lie at residues 708 to 739 (FTSS…FTSQ) and 763 to 809 (PRKI…HLEL). The segment covering 722–739 (GDSNSISGKGNVNTFTSQ) has biased composition (polar residues). The span at 772–791 (ESSDEDEDESEESSDDDEYS) shows a compositional bias: acidic residues. Low complexity predominate over residues 792–809 (DSSLGTSSSGTSSSHLEL).

Belongs to the adaptor complexes large subunit family. As to quaternary structure, adaptor protein complex 3 (AP-3) is a heterotetramer composed of 2 large adaptins (APL5 and APL6), a medium adaptin (APM3) and a small adaptin (APS3). Post-translationally, pyrophosphorylated by 5-diphosphoinositol pentakisphosphate (5-IP7). Serine pyrophosphorylation is achieved by Mg(2+)-dependent, but enzyme independent transfer of a beta-phosphate from a inositol pyrophosphate to a pre-phosphorylated serine residue.

It localises to the golgi apparatus. The protein localises to the cytoplasmic vesicle. The protein resides in the clathrin-coated vesicle membrane. Its function is as follows. Part of the AP-3 complex, an adaptor-related complex which is not clathrin-associated. The complex is associated with the Golgi region as well as more peripheral structures. It facilitates the budding of vesicles from the Golgi membrane and may be directly involved in trafficking to the vacuole. Required for the transport via the ALP pathway, which directs the transport of the cargo proteins PHO8 and VAM3 to the vacuole. The sequence is that of AP-3 complex subunit beta (APL6) from Saccharomyces cerevisiae (strain ATCC 204508 / S288c) (Baker's yeast).